We begin with the raw amino-acid sequence, 285 residues long: TATA box-binding protein-associated factor RNA polymerase I subunit D (285 aa).

Disordered stretches follow at residues 1 to 49 and 85 to 112; these read MAQS…RIPT and KKKR…TRNI. Over residues 21–39 the composition is skewed to polar residues; that stretch reads GNQSDDSSNSSLFKTQCVP. S24 is modified (phosphoserine). Residues 85 to 104 show a composition bias toward basic residues; sequence KKKRKKRKKRKYKPKLRRQG. Residue S134 is modified to Phosphoserine. The segment at 193–219 is disordered; the sequence is HKYMDDDGPLSPIEEPSTEDEATDPQS. S229 carries the phosphoserine modification. 2 stretches are compositionally biased toward basic and acidic residues: residues 242–264 and 273–285; these read NLEQ…KDAT and KGGE…SEVS. The tract at residues 242–285 is disordered; that stretch reads NLEQGKIKKESAFSKKSKAKDATQRGNRRSWKGGEHACLHSEVS.

As to quaternary structure, component of the transcription factor SL1/TIF-IB complex, composed of TBP and at least TAF1A, TAF1B, TAF1C and TAF1D. Interacts with UBTF.

It localises to the nucleus. Component of the transcription factor SL1/TIF-IB complex, which is involved in the assembly of the PIC (preinitiation complex) during RNA polymerase I-dependent transcription. The rate of PIC formation probably is primarily dependent on the rate of association of SL1/TIF-IB with the rDNA promoter. SL1/TIF-IB is involved in stabilization of nucleolar transcription factor 1/UBTF on rDNA. Formation of SL1/TIF-IB excludes the association of TBP with TFIID subunits. This Rattus norvegicus (Rat) protein is TATA box-binding protein-associated factor RNA polymerase I subunit D (Taf1d).